A 1719-amino-acid polypeptide reads, in one-letter code: Cilia- and flagella-associated protein 43 (1719 aa).

The segment at 94–120 is disordered; it reads VREEGAGGGADKPSGSGAVSGKQQSSG. 6 WD repeats span residues 122–165, 174–214, 226–263, 308–345, 413–452, and 513–552; these read SVVL…GRCR, SSTS…EKAV, PAGA…PLQL, TSGA…AAAI, CHVG…LLGR, and LHSA…GRVR. Positions 569-596 are disordered; the sequence is TWPRSDGGSGAASGHAQAGPVSTTSAEG. WD repeat units follow at residues 697–736 and 749–788; these read AHAR…LAAQ and ITAG…AVAN. The segment at 1022–1045 is disordered; the sequence is RAKQEAARKADEDAAKRSAKDNAG. A WD 9 repeat occupies 1073 to 1114; that stretch reads PKPAWLVALGVEPDAVNPKLITEEQNRELKEWQAKEKSLQEE. Disordered regions lie at residues 1220–1269, 1277–1296, and 1325–1372; these read MPGG…AAAA, ATAA…GAAG, and TLNP…AAAA. The span at 1221 to 1233 shows a compositional bias: gly residues; it reads PGGGAIGAAGGHQ. Residues 1257-1269 show a composition bias toward low complexity; it reads ASLAHSPSGAAAA. Residues 1344 to 1358 are compositionally biased toward low complexity; that stretch reads SSALHPSHSHASVHG. Coiled-coil stretches lie at residues 1524–1609 and 1651–1679; these read AAQW…RSAQ and HKKL…RLRT. Residues 1685–1719 are disordered; sequence ESGAVAGMPSPPRRLPPDIKLLAGSPSSSSVAGRT. A compositionally biased stretch (polar residues) spans 1709–1719; sequence SPSSSSVAGRT.

The protein belongs to the CFAP43 family.

The protein resides in the cell projection. The protein localises to the cilium. It localises to the flagellum. It is found in the cytoplasm. Its subcellular location is the cytoskeleton. The protein resides in the flagellum axoneme. Functionally, flagellar protein involved in flagellum axoneme organization and function. This is Cilia- and flagella-associated protein 43 from Chlamydomonas reinhardtii (Chlamydomonas smithii).